Reading from the N-terminus, the 541-residue chain is Chaperonin GroEL 1 (541 aa).

ATP contacts are provided by residues 29-32 (TLGP), 86-90 (DGTTT), glycine 413, 477-479 (NAA), and aspartate 493.

It belongs to the chaperonin (HSP60) family. Forms a cylinder of 14 subunits composed of two heptameric rings stacked back-to-back. Interacts with the co-chaperonin GroES.

It localises to the cytoplasm. It catalyses the reaction ATP + H2O + a folded polypeptide = ADP + phosphate + an unfolded polypeptide.. In terms of biological role, together with its co-chaperonin GroES, plays an essential role in assisting protein folding. The GroEL-GroES system forms a nano-cage that allows encapsulation of the non-native substrate proteins and provides a physical environment optimized to promote and accelerate protein folding. The protein is Chaperonin GroEL 1 of Nocardioides sp. (strain ATCC BAA-499 / JS614).